The primary structure comprises 464 residues: Clusterin-like protein 1 (464 aa).

Residues 1 to 20 form the signal peptide; it reads MQPPLFVISVYLLWLKYCDS. A coiled-coil region spans residues 56–109; that stretch reads IKQMKIMMERREEEHAKLMKALKKCKEEKQEAQKLMNEVQERLEEEEKLCQASS. Cystine bridges form between cysteine 105/cysteine 331, cysteine 116/cysteine 323, cysteine 119/cysteine 320, cysteine 124/cysteine 313, and cysteine 131/cysteine 303. N-linked (GlcNAc...) asparagine glycans are attached at residues asparagine 195, asparagine 255, asparagine 309, asparagine 349, asparagine 398, and asparagine 429.

The protein belongs to the clusterin family.

Its subcellular location is the secreted. The polypeptide is Clusterin-like protein 1 (Rattus norvegicus (Rat)).